Here is a 213-residue protein sequence, read N- to C-terminus: Guanylate kinase (213 aa).

In terms of domain architecture, Guanylate kinase-like spans G6–S186. Position 13-20 (S13–S20) interacts with ATP.

Belongs to the guanylate kinase family.

It is found in the cytoplasm. The enzyme catalyses GMP + ATP = GDP + ADP. Essential for recycling GMP and indirectly, cGMP. This chain is Guanylate kinase, found in Ruegeria pomeroyi (strain ATCC 700808 / DSM 15171 / DSS-3) (Silicibacter pomeroyi).